A 526-amino-acid polypeptide reads, in one-letter code: D-arabinono-1,4-lactone oxidase (526 aa).

Positions 22–196 (FWSRPSLYFQ…VYATLRTVPA (175 aa)) constitute an FAD-binding PCMH-type domain. A Pros-8alpha-FAD histidine modification is found at His-59.

It belongs to the oxygen-dependent FAD-linked oxidoreductase family. Requires FAD as cofactor.

It is found in the mitochondrion membrane. It catalyses the reaction D-arabinono-1,4-lactone + O2 = dehydro-D-arabinono-1,4-lactone + H2O2 + H(+). Its pathway is cofactor biosynthesis; D-erythroascorbate biosynthesis; dehydro-D-arabinono-1,4-lactone from D-arabinose: step 2/2. The sequence is that of D-arabinono-1,4-lactone oxidase (ALO1) from Yarrowia lipolytica (strain CLIB 122 / E 150) (Yeast).